Here is a 627-residue protein sequence, read N- to C-terminus: MACPF domain-containing protein At1g14780 (627 aa).

One can recognise an MACPF domain in the interval 1–339 (MSRDGGDVIE…PPLMDLQYFL (339 aa)).

This sequence belongs to the complement C6/C7/C8/C9 (TC 1.C.39) family.

Its function is as follows. Negatively controls the salicylic acid (SA)-mediated pathway of programmed cell death in plant immunity. The polypeptide is MACPF domain-containing protein At1g14780 (Arabidopsis thaliana (Mouse-ear cress)).